The chain runs to 103 residues: Integration host factor subunit beta (103 aa).

The protein belongs to the bacterial histone-like protein family. As to quaternary structure, heterodimer of an alpha and a beta chain.

This protein is one of the two subunits of integration host factor, a specific DNA-binding protein that functions in genetic recombination as well as in transcriptional and translational control. The protein is Integration host factor subunit beta of Bradyrhizobium sp. (strain BTAi1 / ATCC BAA-1182).